The following is a 406-amino-acid chain: Cysteine desulfurase (406 aa).

Position 226 is an N6-(pyridoxal phosphate)lysine (lysine 226). Cysteine 364 functions as the Cysteine persulfide intermediate in the catalytic mechanism.

This sequence belongs to the class-V pyridoxal-phosphate-dependent aminotransferase family. Csd subfamily. Homodimer. Interacts with SufE and the SufBCD complex composed of SufB, SufC and SufD. The interaction with SufE is required to mediate the direct transfer of the sulfur atom from the S-sulfanylcysteine. It depends on pyridoxal 5'-phosphate as a cofactor.

The protein resides in the cytoplasm. It catalyses the reaction (sulfur carrier)-H + L-cysteine = (sulfur carrier)-SH + L-alanine. It carries out the reaction L-selenocysteine + AH2 = hydrogenselenide + L-alanine + A + H(+). It functions in the pathway cofactor biosynthesis; iron-sulfur cluster biosynthesis. Its function is as follows. Cysteine desulfurases mobilize the sulfur from L-cysteine to yield L-alanine, an essential step in sulfur metabolism for biosynthesis of a variety of sulfur-containing biomolecules. Component of the suf operon, which is activated and required under specific conditions such as oxidative stress and iron limitation. Acts as a potent selenocysteine lyase in vitro, that mobilizes selenium from L-selenocysteine. Selenocysteine lyase activity is however unsure in vivo. The protein is Cysteine desulfurase of Escherichia coli O139:H28 (strain E24377A / ETEC).